We begin with the raw amino-acid sequence, 106 residues long: Large ribosomal subunit protein bL21 (106 aa).

The protein belongs to the bacterial ribosomal protein bL21 family. In terms of assembly, part of the 50S ribosomal subunit. Contacts protein L20.

In terms of biological role, this protein binds to 23S rRNA in the presence of protein L20. The polypeptide is Large ribosomal subunit protein bL21 (Xanthomonas oryzae pv. oryzae (strain MAFF 311018)).